Here is an 88-residue protein sequence, read N- to C-terminus: MLATEKKQEIINNFKKHEGDTGSPEVQIAILTARIVYLTDHFKIHKKDHHSRRGLLKLVGQRRRMLDYLKSRDLDRYKKVIEQLGIRR.

Belongs to the universal ribosomal protein uS15 family. Part of the 30S ribosomal subunit. Forms a bridge to the 50S subunit in the 70S ribosome, contacting the 23S rRNA.

One of the primary rRNA binding proteins, it binds directly to 16S rRNA where it helps nucleate assembly of the platform of the 30S subunit by binding and bridging several RNA helices of the 16S rRNA. Its function is as follows. Forms an intersubunit bridge (bridge B4) with the 23S rRNA of the 50S subunit in the ribosome. The protein is Small ribosomal subunit protein uS15 of Trichlorobacter lovleyi (strain ATCC BAA-1151 / DSM 17278 / SZ) (Geobacter lovleyi).